The primary structure comprises 245 residues: tRNA pseudouridine synthase A (245 aa).

Aspartate 52 serves as the catalytic Nucleophile. Tyrosine 111 lines the substrate pocket.

The protein belongs to the tRNA pseudouridine synthase TruA family. In terms of assembly, homodimer.

It catalyses the reaction uridine(38/39/40) in tRNA = pseudouridine(38/39/40) in tRNA. In terms of biological role, formation of pseudouridine at positions 38, 39 and 40 in the anticodon stem and loop of transfer RNAs. The polypeptide is tRNA pseudouridine synthase A (Wolbachia sp. subsp. Drosophila simulans (strain wRi)).